Here is a 210-residue protein sequence, read N- to C-terminus: LexA repressor (210 aa).

The H-T-H motif DNA-binding region spans Arg-30–Lys-50. Residues Ser-127 and Lys-164 each act as for autocatalytic cleavage activity in the active site.

It belongs to the peptidase S24 family. In terms of assembly, homodimer.

The enzyme catalyses Hydrolysis of Ala-|-Gly bond in repressor LexA.. Represses a number of genes involved in the response to DNA damage (SOS response), including recA and lexA. In the presence of single-stranded DNA, RecA interacts with LexA causing an autocatalytic cleavage which disrupts the DNA-binding part of LexA, leading to derepression of the SOS regulon and eventually DNA repair. This is LexA repressor from Actinobacillus pleuropneumoniae serotype 5b (strain L20).